The following is a 424-amino-acid chain: Zinc finger and BTB domain-containing protein 6 (424 aa).

In terms of domain architecture, BTB spans 33 to 97; it reads CDVSIYINDT…CYTGALEVKR (65 aa). Serine 202 carries the phosphoserine modification. 4 consecutive C2H2-type zinc fingers follow at residues 301 to 323, 326 to 348, 354 to 376, and 382 to 405; these read HQCP…LKMH, FLCL…IRGH, FQCT…LNIH, and YKCH…TSLH. The interval 403–424 is disordered; the sequence is SLHGRSSGEKLPRHDLERQNLL. Basic and acidic residues predominate over residues 408 to 424; that stretch reads SSGEKLPRHDLERQNLL.

The protein localises to the nucleus. In terms of biological role, may be involved in transcriptional regulation. In Bos taurus (Bovine), this protein is Zinc finger and BTB domain-containing protein 6 (ZBTB6).